Consider the following 194-residue polypeptide: Molybdenum cofactor guanylyltransferase (194 aa).

GTP-binding positions include 12 to 14 (LAG), K25, D71, and D101. D101 contributes to the Mg(2+) binding site.

It belongs to the MobA family. Monomer. The cofactor is Mg(2+).

The protein resides in the cytoplasm. It carries out the reaction Mo-molybdopterin + GTP + H(+) = Mo-molybdopterin guanine dinucleotide + diphosphate. Transfers a GMP moiety from GTP to Mo-molybdopterin (Mo-MPT) cofactor (Moco or molybdenum cofactor) to form Mo-molybdopterin guanine dinucleotide (Mo-MGD) cofactor. The chain is Molybdenum cofactor guanylyltransferase from Salmonella typhimurium (strain LT2 / SGSC1412 / ATCC 700720).